A 396-amino-acid chain; its full sequence is Phosphoglycerate kinase (396 aa).

Residues Asp-21–Asn-23, Arg-36, His-59–Lys-62, Arg-119, and Arg-156 each bind substrate. Residues Lys-206, Gly-294, Glu-325, and Gly-352–Ser-355 each bind ATP.

This sequence belongs to the phosphoglycerate kinase family. In terms of assembly, monomer.

The protein resides in the cytoplasm. It catalyses the reaction (2R)-3-phosphoglycerate + ATP = (2R)-3-phospho-glyceroyl phosphate + ADP. Its pathway is carbohydrate degradation; glycolysis; pyruvate from D-glyceraldehyde 3-phosphate: step 2/5. The chain is Phosphoglycerate kinase from Staphylococcus aureus (strain USA300).